Here is a 105-residue protein sequence, read N- to C-terminus: uncharacterized protein (105 aa).

The disordered stretch occupies residues 22 to 105 (GSAGHGATEA…KKRIIKGKVM (84 aa)). The segment covering 61–83 (HDSRPARGDARKRHCQENNKTDR) has biased composition (basic and acidic residues). Over residues 93 to 105 (NRRKKRIIKGKVM) the composition is skewed to basic residues.

This is an uncharacterized protein from Escherichia coli (strain K12).